The following is a 488-amino-acid chain: Receptor-like tyrosine-protein kinase kin-15 (488 aa).

Residues methionine 1–serine 26 form the signal peptide. Asparagine 25 carries an N-linked (GlcNAc...) asparagine glycan. The Extracellular segment spans residues threonine 27–methionine 50. A helical membrane pass occupies residues phenylalanine 51 to leucine 70. Residues serine 71–aspartate 488 are Cytoplasmic-facing. The Protein kinase domain occupies glutamate 144 to valine 458. Residues leucine 150 to valine 158 and lysine 183 each bind ATP. Catalysis depends on aspartate 319, which acts as the Proton acceptor.

It belongs to the protein kinase superfamily. Tyr protein kinase family. In terms of tissue distribution, hypodermal cells.

It localises to the cell membrane. The enzyme catalyses L-tyrosyl-[protein] + ATP = O-phospho-L-tyrosyl-[protein] + ADP + H(+). Its function is as follows. May be specifically involved in cell-cell interactions regulating cell fusions that generate the hypodermis during postembryonic development. It has a role in the development of the HYP7 hypodermal syncytium. This Caenorhabditis elegans protein is Receptor-like tyrosine-protein kinase kin-15 (kin-15).